Consider the following 494-residue polypeptide: Cytochrome P450 2A7 (494 aa).

C439 lines the heme pocket.

Belongs to the cytochrome P450 family. The cofactor is heme.

The protein resides in the endoplasmic reticulum membrane. It localises to the microsome membrane. The catalysed reaction is an organic molecule + reduced [NADPH--hemoprotein reductase] + O2 = an alcohol + oxidized [NADPH--hemoprotein reductase] + H2O + H(+). In terms of biological role, cytochromes P450 are a group of heme-thiolate monooxygenases. In liver microsomes, this enzyme is involved in an NADPH-dependent electron transport pathway. It oxidizes a variety of structurally unrelated compounds, including steroids, fatty acids, and xenobiotics. The polypeptide is Cytochrome P450 2A7 (CYP2A7) (Homo sapiens (Human)).